Reading from the N-terminus, the 146-residue chain is Hemoglobin subunit beta (146 aa).

At valine 1 the chain carries N-acetylvaline. Positions 2-146 (HLTGEEKAAV…VANALAHKYH (145 aa)) constitute a Globin domain. Residue threonine 12 is modified to Phosphothreonine. The residue at position 44 (serine 44) is a Phosphoserine. An N6-acetyllysine modification is found at lysine 59. Residue histidine 63 participates in heme b binding. Lysine 82 carries the N6-acetyllysine modification. Histidine 92 lines the heme b pocket. An S-nitrosocysteine modification is found at cysteine 93. Lysine 144 carries the post-translational modification N6-acetyllysine.

It belongs to the globin family. Heterotetramer of two alpha chains and two beta chains. In terms of tissue distribution, red blood cells.

Involved in oxygen transport from the lung to the various peripheral tissues. This Mustela putorius furo (European domestic ferret) protein is Hemoglobin subunit beta (HBB).